The sequence spans 448 residues: UDP-N-acetylmuramoylalanine--D-glutamate ligase (448 aa).

Residue 116-122 (GSNAKST) coordinates ATP.

This sequence belongs to the MurCDEF family.

It is found in the cytoplasm. The catalysed reaction is UDP-N-acetyl-alpha-D-muramoyl-L-alanine + D-glutamate + ATP = UDP-N-acetyl-alpha-D-muramoyl-L-alanyl-D-glutamate + ADP + phosphate + H(+). Its pathway is cell wall biogenesis; peptidoglycan biosynthesis. Its function is as follows. Cell wall formation. Catalyzes the addition of glutamate to the nucleotide precursor UDP-N-acetylmuramoyl-L-alanine (UMA). The sequence is that of UDP-N-acetylmuramoylalanine--D-glutamate ligase from Pseudomonas syringae pv. tomato (strain ATCC BAA-871 / DC3000).